Consider the following 287-residue polypeptide: Pantothenate synthetase (287 aa).

Position 30 to 37 (Met-30 to His-37) interacts with ATP. His-37 functions as the Proton donor in the catalytic mechanism. Gln-61 provides a ligand contact to (R)-pantoate. Gln-61 serves as a coordination point for beta-alanine. Gly-149 to Asp-152 is a binding site for ATP. Gln-155 lines the (R)-pantoate pocket. ATP is bound by residues Val-178 and Leu-186 to Arg-189.

The protein belongs to the pantothenate synthetase family. As to quaternary structure, homodimer.

The protein localises to the cytoplasm. The enzyme catalyses (R)-pantoate + beta-alanine + ATP = (R)-pantothenate + AMP + diphosphate + H(+). It functions in the pathway cofactor biosynthesis; (R)-pantothenate biosynthesis; (R)-pantothenate from (R)-pantoate and beta-alanine: step 1/1. Catalyzes the condensation of pantoate with beta-alanine in an ATP-dependent reaction via a pantoyl-adenylate intermediate. The sequence is that of Pantothenate synthetase from Pseudomonas putida (strain GB-1).